A 780-amino-acid polypeptide reads, in one-letter code: WD repeat-containing protein 27 (780 aa).

WD repeat units lie at residues 3–56, 61–100, 111–150, 154–193, 200–236, 291–335, 342–385, 500–540, 544–582, 588–639, 644–685, 691–738, and 752–779; these read TPPE…VWSS, HQLLTLQGHHQLITAVVFGNQIDPLLLCSASEDYIIMWNV, LTPRGTILGSLLQTVLCLRFSLDDRAIAVCAGNKISVMDV, SVLVELKGHQGSVTAVEFCPWQAHTLISVSEDRSFKVWDF, YSSSILTAYPLLNLLINEENQQLVTGSADGQLWIFSL, FPIL…LASF, HFKE…VLEI, NLSR…VFNA, GPPAAFSGHDGAVSTICWSHDKRWLLSTGRDRTLRVWSV, MLLL…RYKP, KPIF…VFDL, AAVL…LWDL, and AFCTVLQDTQIRLLKWPSTQQLLSLSQP.

In Mus musculus (Mouse), this protein is WD repeat-containing protein 27 (Wdr27).